Here is a 277-residue protein sequence, read N- to C-terminus: NH(3)-dependent NAD(+) synthetase (277 aa).

46-53 provides a ligand contact to ATP; sequence GISGGQDS. Residue Asp52 coordinates Mg(2+). A deamido-NAD(+)-binding site is contributed by Arg142. Thr162 contacts ATP. Glu167 contacts Mg(2+). Deamido-NAD(+) is bound by residues Lys175 and Asp182. ATP is bound by residues Lys191 and Thr213. 263-264 contacts deamido-NAD(+); sequence HK.

This sequence belongs to the NAD synthetase family. As to quaternary structure, homodimer.

It catalyses the reaction deamido-NAD(+) + NH4(+) + ATP = AMP + diphosphate + NAD(+) + H(+). It participates in cofactor biosynthesis; NAD(+) biosynthesis; NAD(+) from deamido-NAD(+) (ammonia route): step 1/1. Functionally, catalyzes the ATP-dependent amidation of deamido-NAD to form NAD. Uses ammonia as a nitrogen source. This is NH(3)-dependent NAD(+) synthetase from Corynebacterium glutamicum (strain R).